A 445-amino-acid polypeptide reads, in one-letter code: Mitochondrial enolase superfamily member 1 (445 aa).

Residues 24–26, Y34, and K220 each bind substrate; that span reads GSD. K222 serves as the catalytic Proton donor/acceptor. A Mg(2+)-binding site is contributed by D250. Substrate-binding positions include N252, E276, E305, 355–357, and E386; that span reads HAG. The Mg(2+) site is built by E276 and E305. H355 is an active-site residue.

The protein belongs to the mandelate racemase/muconate lactonizing enzyme family. ENOSF1 subfamily. Mg(2+) is required as a cofactor.

The protein localises to the mitochondrion. The enzyme catalyses L-fuconate = 2-dehydro-3-deoxy-L-fuconate + H2O. Its function is as follows. Plays a role in the catabolism of L-fucose, a sugar that is part of the carbohydrates that are attached to cellular glycoproteins. Catalyzes the dehydration of L-fuconate to 2-keto-3-deoxy-L-fuconate by the abstraction of the 2-proton to generate an enediolate intermediate that is stabilized by the magnesium ion. May down-regulate thymidylate synthase activity, possibly already at the RNA level, by promoting the degradation of TYMS mRNA via an antisense RNA-based mechanism. The protein is Mitochondrial enolase superfamily member 1 (enosf1) of Xenopus laevis (African clawed frog).